A 245-amino-acid polypeptide reads, in one-letter code: NAD(P)H-quinone oxidoreductase subunit K (245 aa).

Cys58, Cys59, Cys123, and Cys154 together coordinate [4Fe-4S] cluster. The interval 210–245 (SDTRSAPPKELAEAIGMPIPPALLTEKAQKEEQTRG) is disordered. The segment covering 236–245 (KAQKEEQTRG) has biased composition (basic and acidic residues).

It belongs to the complex I 20 kDa subunit family. As to quaternary structure, NDH-1 can be composed of about 15 different subunits; different subcomplexes with different compositions have been identified which probably have different functions. The cofactor is [4Fe-4S] cluster.

The protein localises to the cellular thylakoid membrane. The catalysed reaction is a plastoquinone + NADH + (n+1) H(+)(in) = a plastoquinol + NAD(+) + n H(+)(out). The enzyme catalyses a plastoquinone + NADPH + (n+1) H(+)(in) = a plastoquinol + NADP(+) + n H(+)(out). Functionally, NDH-1 shuttles electrons from an unknown electron donor, via FMN and iron-sulfur (Fe-S) centers, to quinones in the respiratory and/or the photosynthetic chain. The immediate electron acceptor for the enzyme in this species is believed to be plastoquinone. Couples the redox reaction to proton translocation, and thus conserves the redox energy in a proton gradient. Cyanobacterial NDH-1 also plays a role in inorganic carbon-concentration. The chain is NAD(P)H-quinone oxidoreductase subunit K from Nostoc punctiforme (strain ATCC 29133 / PCC 73102).